Reading from the N-terminus, the 83-residue chain is U5-theraphotoxin-Hs1d (83 aa).

The N-terminal stretch at 1 to 21 (MKTSMFLTLTGLVLLFVVCYA) is a signal peptide. Residues 22 to 49 (SESEEKEFPKELLSSIFAADSDFKVEER) constitute a propeptide that is removed on maturation. Intrachain disulfides connect C51–C63, C56–C68, and C62–C75.

The protein belongs to the neurotoxin 10 (Hwtx-1) family. 51 (Hntx-8) subfamily. Hntx-8 sub-subfamily. As to expression, expressed by the venom gland.

The protein resides in the secreted. Functionally, agglutinates erythrocytes. The chain is U5-theraphotoxin-Hs1d from Cyriopagopus schmidti (Chinese bird spider).